The chain runs to 300 residues: Mycothiol acetyltransferase (300 aa).

N-acetyltransferase domains follow at residues 4-140 and 151-300; these read IDWR…RPLT and VRLA…AVAD. D36 is a binding site for 1D-myo-inositol 2-(L-cysteinylamino)-2-deoxy-alpha-D-glucopyranoside. Residue 79–81 participates in acetyl-CoA binding; the sequence is LVV. Residues E178, K219, and E227 each contribute to the 1D-myo-inositol 2-(L-cysteinylamino)-2-deoxy-alpha-D-glucopyranoside site. Acetyl-CoA is bound at residue 231–233; that stretch reads VGV. Y269 is a 1D-myo-inositol 2-(L-cysteinylamino)-2-deoxy-alpha-D-glucopyranoside binding site. 274–279 serves as a coordination point for acetyl-CoA; the sequence is NGAAVK.

This sequence belongs to the acetyltransferase family. MshD subfamily. As to quaternary structure, monomer.

It carries out the reaction 1D-myo-inositol 2-(L-cysteinylamino)-2-deoxy-alpha-D-glucopyranoside + acetyl-CoA = mycothiol + CoA + H(+). Functionally, catalyzes the transfer of acetyl from acetyl-CoA to desacetylmycothiol (Cys-GlcN-Ins) to form mycothiol. This is Mycothiol acetyltransferase from Mycobacterium sp. (strain JLS).